Reading from the N-terminus, the 244-residue chain is tRNA (guanine-N(7)-)-methyltransferase (244 aa).

A compositionally biased stretch (polar residues) spans M1–Q10. A disordered region spans residues M1–R20. S-adenosyl-L-methionine-binding residues include E74, E99, D126, and D149. The active site involves D149. Residues K153, D185, and T222 to E225 contribute to the substrate site.

It belongs to the class I-like SAM-binding methyltransferase superfamily. TrmB family.

The catalysed reaction is guanosine(46) in tRNA + S-adenosyl-L-methionine = N(7)-methylguanosine(46) in tRNA + S-adenosyl-L-homocysteine. It participates in tRNA modification; N(7)-methylguanine-tRNA biosynthesis. Catalyzes the formation of N(7)-methylguanine at position 46 (m7G46) in tRNA. This is tRNA (guanine-N(7)-)-methyltransferase from Pseudomonas paraeruginosa (strain DSM 24068 / PA7) (Pseudomonas aeruginosa (strain PA7)).